A 486-amino-acid chain; its full sequence is Malonate-semialdehyde dehydrogenase (486 aa).

NAD(+) is bound by residues phenylalanine 154, lysine 178, glutamate 181, arginine 182, and serine 231. Cysteine 286 serves as the catalytic Nucleophile. Residue glutamate 386 coordinates NAD(+).

Belongs to the aldehyde dehydrogenase family. IolA subfamily. As to quaternary structure, homotetramer.

The enzyme catalyses 3-oxopropanoate + NAD(+) + CoA + H2O = hydrogencarbonate + acetyl-CoA + NADH + H(+). It catalyses the reaction 2-methyl-3-oxopropanoate + NAD(+) + CoA + H2O = propanoyl-CoA + hydrogencarbonate + NADH + H(+). It participates in polyol metabolism; myo-inositol degradation into acetyl-CoA; acetyl-CoA from myo-inositol: step 7/7. Functionally, catalyzes the oxidation of malonate semialdehyde (MSA) and methylmalonate semialdehyde (MMSA) into acetyl-CoA and propanoyl-CoA, respectively. Is involved in a myo-inositol catabolic pathway. Bicarbonate, and not CO2, is the end-product of the enzymatic reaction. This is Malonate-semialdehyde dehydrogenase from Bacillus cereus (strain AH187).